Consider the following 444-residue polypeptide: Chromosome partition protein MukF (444 aa).

Residues 212-240 (LDETSGNLRELQDTLNAAGDKLQAQLLRI) are leucine-zipper.

It belongs to the MukF family. As to quaternary structure, interacts, and probably forms a ternary complex, with MukE and MukB via its C-terminal region. The complex formation is stimulated by calcium or magnesium. It is required for an interaction between MukE and MukB.

The protein localises to the cytoplasm. Its subcellular location is the nucleoid. Its function is as follows. Involved in chromosome condensation, segregation and cell cycle progression. May participate in facilitating chromosome segregation by condensation DNA from both sides of a centrally located replisome during cell division. Not required for mini-F plasmid partitioning. Probably acts via its interaction with MukB and MukE. Overexpression results in anucleate cells. It has a calcium binding activity. This Haemophilus influenzae (strain PittEE) protein is Chromosome partition protein MukF.